The following is a 382-amino-acid chain: Sphingosine 1-phosphate receptor 1 (382 aa).

N-acetylvaline is present on Val2. The Extracellular portion of the chain corresponds to 2 to 46 (VSTSIPEVKALRSSVSDYGNYDIIVRHYNYTGKLNIGAEKDHGIK). Lys10 carries the N6-acetyllysine modification. A glycan (N-linked (GlcNAc...) asparagine) is linked at Asn30. The helical transmembrane segment at 47–68 (LTSVVFILICCFIILENIFVLL) threads the bilayer. Topologically, residues 69-82 (TIWKTKKFHRPMYY) are cytoplasmic. The chain crosses the membrane as a helical span at residues 83–104 (FIGNLALSDLLAGVAYTANLLL). Over 105–116 (SGATTYKLTPAQ) the chain is Extracellular. The chain crosses the membrane as a helical span at residues 117 to 138 (WFLREGSMFVALSASVFSLLAI). Position 120–121 (120–121 (RE)) interacts with sphing-4-enine 1-phosphate. Over 139–160 (AIERYITMLKMKLHNGSNSSRS) the chain is Cytoplasmic. A helical transmembrane segment spans residues 161–182 (FLLISACWVISLILGGLPIMGW). The Extracellular portion of the chain corresponds to 183-196 (NCISSLSSCSTVLP). An intrachain disulfide couples Cys184 to Cys191. The helical transmembrane segment at 197–224 (LYHKHYILFCTTVFTLLLLSIVILYCRI) threads the bilayer. At 225–257 (YSLVRTRSRRLTFRKNISKASRSSEKSLALLKT) the chain is on the cytoplasmic side. Thr236 is modified (phosphothreonine). Residues 258–278 (VIIVLSVFIACWAPLFILLLL) traverse the membrane as a helical segment. Sphing-4-enine 1-phosphate is bound at residue 265–269 (FIACW). The Extracellular portion of the chain corresponds to 279-289 (DVGCKAKTCDI). Cys282 and Cys287 are joined by a disulfide. A helical transmembrane segment spans residues 290–310 (LYKAEYFLVLAVLNSGTNPII). Over 311-382 (YTLTNKEMRR…MSSGNVNSSS (72 aa)) the chain is Cytoplasmic. Cys328 carries S-palmitoyl cysteine lipidation. The disordered stretch occupies residues 348-382 (MEFSRSKSDNSSHPQKDDGDNPETIMSSGNVNSSS). Phosphoserine is present on residues Ser351 and Ser353. The span at 351–366 (SRSKSDNSSHPQKDDG) shows a compositional bias: basic and acidic residues. Positions 371–382 (TIMSSGNVNSSS) are enriched in polar residues.

The protein belongs to the G-protein coupled receptor 1 family. In terms of assembly, interacts with GNAI1 and GNAI3. Interacts with CD69; this interaction promotes S1PR1 degradation. In terms of processing, palmitoylated by ZDHHC5. Palmitoylation is required for targeting to plasma membrane, enabling G(i) coupling. In terms of tissue distribution, expressed in a wide variety of tissues with highest levels in brain, heart and spleen. Lower levels found in kidney, liver, lung, muscle, placenta, thymus, and uterus. Very low levels in intestine, stomach and testis. According to PubMed:9931453, expressed modestly in apparent endothelial cells surrounding some blood vessels (e.g. aortic trunk).

Its subcellular location is the cell membrane. It localises to the endosome. It is found in the membrane raft. Its function is as follows. G-protein coupled receptor for the bioactive lysosphingolipid sphingosine 1-phosphate (S1P) that seems to be coupled to the G(i) subclass of heteromeric G proteins. Signaling leads to the activation of RAC1, SRC, PTK2/FAK1 and MAP kinases. Plays an important role in cell migration, probably via its role in the reorganization of the actin cytoskeleton and the formation of lamellipodia in response to stimuli that increase the activity of the sphingosine kinase SPHK1. Required for normal chemotaxis toward sphingosine 1-phosphate. Required for normal embryonic heart development and normal cardiac morphogenesis. Plays an important role in the regulation of sprouting angiogenesis and vascular maturation. Inhibits sprouting angiogenesis to prevent excessive sprouting during blood vessel development. Required for normal egress of mature T-cells from the thymus into the blood stream and into peripheral lymphoid organs. Plays a role in the migration of osteoclast precursor cells, the regulation of bone mineralization and bone homeostasis. Plays a role in responses to oxidized 1-palmitoyl-2-arachidonoyl-sn-glycero-3-phosphocholine by pulmonary endothelial cells and in the protection against ventilator-induced lung injury. This is Sphingosine 1-phosphate receptor 1 from Mus musculus (Mouse).